An 816-amino-acid chain; its full sequence is Leucine--tRNA ligase (816 aa).

Positions 40 to 51 (SYPSGSQLHAGH) match the 'HIGH' region motif. Residues 576–580 (KMSKS) carry the 'KMSKS' region motif. Lysine 579 provides a ligand contact to ATP.

The protein belongs to the class-I aminoacyl-tRNA synthetase family.

It is found in the cytoplasm. The catalysed reaction is tRNA(Leu) + L-leucine + ATP = L-leucyl-tRNA(Leu) + AMP + diphosphate. In Clostridium perfringens (strain ATCC 13124 / DSM 756 / JCM 1290 / NCIMB 6125 / NCTC 8237 / Type A), this protein is Leucine--tRNA ligase.